Reading from the N-terminus, the 400-residue chain is Elongation factor Tu 2 (400 aa).

One can recognise a tr-type G domain in the interval 10 to 209; sequence KPHVNIGTIG…KVDEYIPTPQ (200 aa). Residues 19 to 26 form a G1 region; that stretch reads GHVDHGKT. 19–26 serves as a coordination point for GTP; that stretch reads GHVDHGKT. Threonine 26 serves as a coordination point for Mg(2+). The tract at residues 60–64 is G2; sequence GITIN. Residues 81–84 are G3; sequence DCPG. Residues 81–85 and 136–139 contribute to the GTP site; these read DCPGH and NKAD. A G4 region spans residues 136-139; that stretch reads NKAD. Residues 174–176 are G5; that stretch reads SAL.

This sequence belongs to the TRAFAC class translation factor GTPase superfamily. Classic translation factor GTPase family. EF-Tu/EF-1A subfamily. In terms of assembly, monomer.

The protein resides in the cytoplasm. The catalysed reaction is GTP + H2O = GDP + phosphate + H(+). In terms of biological role, GTP hydrolase that promotes the GTP-dependent binding of aminoacyl-tRNA to the A-site of ribosomes during protein biosynthesis. This chain is Elongation factor Tu 2, found in Carboxydothermus hydrogenoformans (strain ATCC BAA-161 / DSM 6008 / Z-2901).